The following is a 152-amino-acid chain: Atypical leghemoglobin 2-1 (152 aa).

Residues 3–152 (TFSEEQEALV…LAGVIKKGMS (150 aa)) enclose the Globin domain. Tyr31 is subject to Nitrated tyrosine. Heme b is bound at residue Ser46. At Ser46 the chain carries Phosphoserine. His64 provides a ligand contact to O2. Heme b-binding residues include Lys67, His99, and Arg102. Nitrated tyrosine is present on Tyr140.

The protein belongs to the plant globin family. Monomer. Post-translationally, nitrated in effective nodules and particularly in hypoxic conditions; this mechanism may play a protective role in the symbiosis by buffering toxic peroxynitrite NO(2)(-). Nitration level decrease during nodule senescence. Phosphorylation at Ser-46 disrupts the molecular environment of its porphyrin ring oxygen binding pocket, thus leading to a reduced oxygen consumption and to the delivery of oxygen O(2) to symbiosomes. Mainly expressed in leaves and, at low levels, in roots of non-nodulated plants. However, accumulates also in nodules and roots, and, to a lower extent, in leaves, stems, flowers and fruits, in nodulated plants.

Atypical leghemoglobin that reversibly binds oxygen O(2) through a pentacoordinated heme iron. In nodules, facilitates the diffusion of oxygen to the bacteroids while preventing the bacterial nitrogenase from being inactivated by buffering dioxygen, nitric oxide and carbon monoxide. This role is essential for symbiotic nitrogen fixation (SNF). Seems not restricted to symbiotic nitrogen fixation and root nodules formation, but also contributes to general plant development and metabolism. The sequence is that of Atypical leghemoglobin 2-1 from Lotus japonicus (Lotus corniculatus var. japonicus).